The primary structure comprises 545 residues: Glucose-6-phosphate isomerase (545 aa).

Glu-351 acts as the Proton donor in catalysis. Active-site residues include His-382 and Lys-510.

Belongs to the GPI family.

Its subcellular location is the cytoplasm. The enzyme catalyses alpha-D-glucose 6-phosphate = beta-D-fructose 6-phosphate. It participates in carbohydrate biosynthesis; gluconeogenesis. It functions in the pathway carbohydrate degradation; glycolysis; D-glyceraldehyde 3-phosphate and glycerone phosphate from D-glucose: step 2/4. Its function is as follows. Catalyzes the reversible isomerization of glucose-6-phosphate to fructose-6-phosphate. The protein is Glucose-6-phosphate isomerase of Shewanella frigidimarina (strain NCIMB 400).